Consider the following 275-residue polypeptide: Dolichyl-diphosphooligosaccharide--protein glycosyltransferase subunit delta (275 aa).

Residues 1–18 (MKTSVFIAIFNLLVCALA) form the signal peptide. 3 helical membrane passes run 179 to 199 (VFIIAAFTLLLGLFGSWVGFI), 214 to 234 (VQLLHNVSFLISVLGFELNFV), and 241 to 261 (SIFTTLFYGFILSIPCVYFGV).

The protein belongs to the SWP1 family. Component of the oligosaccharyltransferase (OST) complex.

It localises to the endoplasmic reticulum membrane. It functions in the pathway protein modification; protein glycosylation. Its function is as follows. Subunit of the oligosaccharyl transferase (OST) complex that catalyzes the initial transfer of a defined glycan (Glc(3)Man(9)GlcNAc(2) in eukaryotes) from the lipid carrier dolichol-pyrophosphate to an asparagine residue within an Asn-X-Ser/Thr consensus motif in nascent polypeptide chains, the first step in protein N-glycosylation. N-glycosylation occurs cotranslationally and the complex associates with the Sec61 complex at the channel-forming translocon complex that mediates protein translocation across the endoplasmic reticulum (ER). All subunits are required for a maximal enzyme activity. Plays a role in cell wall integrity and in engulfment by macrophages. The sequence is that of Dolichyl-diphosphooligosaccharide--protein glycosyltransferase subunit delta from Candida albicans (strain SC5314 / ATCC MYA-2876) (Yeast).